A 444-amino-acid polypeptide reads, in one-letter code: Methylenetetrahydrofolate--tRNA-(uracil-5-)-methyltransferase TrmFO (444 aa).

10 to 15 (GAGLAG) contacts FAD.

The protein belongs to the MnmG family. TrmFO subfamily. The cofactor is FAD.

It is found in the cytoplasm. It carries out the reaction uridine(54) in tRNA + (6R)-5,10-methylene-5,6,7,8-tetrahydrofolate + NADH + H(+) = 5-methyluridine(54) in tRNA + (6S)-5,6,7,8-tetrahydrofolate + NAD(+). It catalyses the reaction uridine(54) in tRNA + (6R)-5,10-methylene-5,6,7,8-tetrahydrofolate + NADPH + H(+) = 5-methyluridine(54) in tRNA + (6S)-5,6,7,8-tetrahydrofolate + NADP(+). Its function is as follows. Catalyzes the folate-dependent formation of 5-methyl-uridine at position 54 (M-5-U54) in all tRNAs. This is Methylenetetrahydrofolate--tRNA-(uracil-5-)-methyltransferase TrmFO from Streptococcus pneumoniae serotype 4 (strain ATCC BAA-334 / TIGR4).